The chain runs to 776 residues: Protein translocase subunit SecA 2 (776 aa).

Residues Q80, 98 to 102 (GEGKT), and D486 contribute to the ATP site.

This sequence belongs to the SecA family. Monomer and homodimer. Part of the essential Sec protein translocation apparatus which comprises SecA, SecYEG and auxiliary proteins SecDF. Other proteins may also be involved.

The protein resides in the cell membrane. Its subcellular location is the cytoplasm. It carries out the reaction ATP + H2O + cellular proteinSide 1 = ADP + phosphate + cellular proteinSide 2.. In terms of biological role, part of the Sec protein translocase complex. Interacts with the SecYEG preprotein conducting channel. Has a central role in coupling the hydrolysis of ATP to the transfer of proteins into and across the cell membrane, serving as an ATP-driven molecular motor driving the stepwise translocation of polypeptide chains across the membrane. This chain is Protein translocase subunit SecA 2, found in Listeria welshimeri serovar 6b (strain ATCC 35897 / DSM 20650 / CCUG 15529 / CIP 8149 / NCTC 11857 / SLCC 5334 / V8).